The chain runs to 222 residues: Pyridoxine/pyridoxamine 5'-phosphate oxidase (222 aa).

Residues 11–14 (RVEY) and K79 each bind substrate. FMN contacts are provided by residues 74–79 (RTVLCK), 89–90 (YT), K96, and Q118. 3 residues coordinate substrate: Y136, R140, and S144. FMN is bound by residues 153–154 (QS) and W199. 205–207 (RVH) is a substrate binding site. R209 contributes to the FMN binding site.

This sequence belongs to the pyridoxamine 5'-phosphate oxidase family. As to quaternary structure, homodimer. The cofactor is FMN.

It carries out the reaction pyridoxamine 5'-phosphate + O2 + H2O = pyridoxal 5'-phosphate + H2O2 + NH4(+). The catalysed reaction is pyridoxine 5'-phosphate + O2 = pyridoxal 5'-phosphate + H2O2. The protein operates within cofactor metabolism; pyridoxal 5'-phosphate salvage; pyridoxal 5'-phosphate from pyridoxamine 5'-phosphate: step 1/1. Its pathway is cofactor metabolism; pyridoxal 5'-phosphate salvage; pyridoxal 5'-phosphate from pyridoxine 5'-phosphate: step 1/1. Functionally, catalyzes the oxidation of either pyridoxine 5'-phosphate (PNP) or pyridoxamine 5'-phosphate (PMP) into pyridoxal 5'-phosphate (PLP). In Mycolicibacterium vanbaalenii (strain DSM 7251 / JCM 13017 / BCRC 16820 / KCTC 9966 / NRRL B-24157 / PYR-1) (Mycobacterium vanbaalenii), this protein is Pyridoxine/pyridoxamine 5'-phosphate oxidase.